The chain runs to 292 residues: tRNA-splicing endonuclease (292 aa).

Active-site residues include tyrosine 231, histidine 238, and lysine 267.

It belongs to the tRNA-intron endonuclease family. Archaeal long subfamily. As to quaternary structure, homodimer.

It catalyses the reaction pretRNA = a 3'-half-tRNA molecule with a 5'-OH end + a 5'-half-tRNA molecule with a 2',3'-cyclic phosphate end + an intron with a 2',3'-cyclic phosphate and a 5'-hydroxyl terminus.. Endonuclease that removes tRNA introns. Cleaves pre-tRNA at the 5'- and 3'-splice sites to release the intron. The products are an intron and two tRNA half-molecules bearing 2',3' cyclic phosphate and 5'-OH termini. Recognizes a pseudosymmetric substrate in which 2 bulged loops of 3 bases are separated by a stem of 4 bp. This is tRNA-splicing endonuclease from Thermoplasma volcanium (strain ATCC 51530 / DSM 4299 / JCM 9571 / NBRC 15438 / GSS1).